Reading from the N-terminus, the 657-residue chain is Hemocyanin B chain (657 aa).

A disulfide bond links Cys93 and Cys98. An N-linked (GlcNAc...) asparagine glycan is attached at Asn167. His194, His198, His224, His344, His348, and His384 together coordinate Cu cation. Intrachain disulfides connect Cys483–Cys502 and Cys562–Cys609.

This sequence belongs to the tyrosinase family. Hemocyanin subfamily. As to quaternary structure, hexamer of a number of different chains, of which A, B, and C have been identified. In terms of tissue distribution, hemolymph.

The protein resides in the secreted. Its subcellular location is the extracellular space. Hemocyanins are copper-containing oxygen carriers occurring freely dissolved in the hemolymph of many mollusks and arthropods. The polypeptide is Hemocyanin B chain (Panulirus interruptus (California spiny lobster)).